Here is a 573-residue protein sequence, read N- to C-terminus: DNA ligase (573 aa).

Position 250 (glutamate 250) interacts with ATP. Lysine 252 serves as the catalytic N6-AMP-lysine intermediate. 6 residues coordinate ATP: arginine 257, arginine 272, glutamate 301, phenylalanine 342, arginine 432, and lysine 438.

It belongs to the ATP-dependent DNA ligase family. Mg(2+) serves as cofactor.

The enzyme catalyses ATP + (deoxyribonucleotide)n-3'-hydroxyl + 5'-phospho-(deoxyribonucleotide)m = (deoxyribonucleotide)n+m + AMP + diphosphate.. Functionally, DNA ligase that seals nicks in double-stranded DNA during DNA replication, DNA recombination and DNA repair. This Methanococcus maripaludis (strain DSM 14266 / JCM 13030 / NBRC 101832 / S2 / LL) protein is DNA ligase.